Here is a 276-residue protein sequence, read N- to C-terminus: Ribonuclease T2 (276 aa).

The signal sequence occupies residues Met-1–Phe-17. Disulfide bonds link Cys-22–Cys-41, Cys-30–Cys-77, Cys-40–Cys-143, Cys-85–Cys-135, and Cys-208–Cys-242. A glycan (N-linked (GlcNAc...) asparagine) is linked at Asn-32. His-70 is an active-site residue. An N-linked (GlcNAc...) asparagine glycan is attached at Asn-93. Active-site residues include Glu-128 and His-132. A glycan (N-linked (GlcNAc...) asparagine) is linked at Asn-256.

The protein belongs to the RNase T2 family.

The enzyme catalyses a ribonucleotidyl-ribonucleotide-RNA + H2O = a 3'-end 3'-phospho-ribonucleotide-RNA + a 5'-end dephospho-ribonucleoside-RNA + H(+). This chain is Ribonuclease T2 (rntB), found in Aspergillus oryzae (strain ATCC 42149 / RIB 40) (Yellow koji mold).